A 496-amino-acid chain; its full sequence is Glycogen synthase (496 aa).

Residue lysine 24 participates in ADP-alpha-D-glucose binding.

The protein belongs to the glycosyltransferase 1 family. Bacterial/plant glycogen synthase subfamily.

The catalysed reaction is [(1-&gt;4)-alpha-D-glucosyl](n) + ADP-alpha-D-glucose = [(1-&gt;4)-alpha-D-glucosyl](n+1) + ADP + H(+). Its pathway is glycan biosynthesis; glycogen biosynthesis. In terms of biological role, synthesizes alpha-1,4-glucan chains using ADP-glucose. The protein is Glycogen synthase of Nitrosospira multiformis (strain ATCC 25196 / NCIMB 11849 / C 71).